Consider the following 89-residue polypeptide: Small ribosomal subunit protein bS20 (89 aa).

The interval 1–22 is disordered; it reads MANTASARKRIRQNERRRERNV. The span at 12–22 shows a compositional bias: basic and acidic residues; it reads RQNERRRERNV.

It belongs to the bacterial ribosomal protein bS20 family.

In terms of biological role, binds directly to 16S ribosomal RNA. This Gluconobacter oxydans (strain 621H) (Gluconobacter suboxydans) protein is Small ribosomal subunit protein bS20.